We begin with the raw amino-acid sequence, 579 residues long: Mitochondrial distribution and morphology protein 36 (579 aa).

The segment at 1–27 (MDENGTVKPGYELKGLNSGNSRSNMDK) is disordered. S42 is subject to Phosphoserine. Disordered regions lie at residues 378–401 (TPIN…GRRL) and 446–518 (DNKH…ESQS). The span at 379–390 (PINSSDSDNLSN) shows a compositional bias: polar residues. The span at 446-463 (DNKHSTKDTDSNIRRNEH) shows a compositional bias: basic and acidic residues. Low complexity predominate over residues 495–518 (PSQSSSRMSTLPLSPSSSLLESQS).

In terms of biological role, involved in mitochondrial distribution and morphology. This is Mitochondrial distribution and morphology protein 36 (MDM36) from Saccharomyces cerevisiae (strain ATCC 204508 / S288c) (Baker's yeast).